We begin with the raw amino-acid sequence, 230 residues long: MQIYRRPFETKTWQYRICPAETMVKIHPDLTTSGAGEETSSPYLTTEQESFTIWMKSLVFNTNGCTVFDSKGNIIYRVDNYNSKSCREVYLMDLSGHVLFTLRRQKFGLFKTWEGYRSSSATVESTTKLEYFRVKNNVFQVPNKDSSSSYRVNAGSCRNDEQYCYKMVTRGSSLAIEDNCGKLLAEVKRKQSINGLKLGDDVLTMMVESQVDHSFIIGLVLAHSLINCIL.

This sequence belongs to the LOR family.

Its function is as follows. Might be related to the phospholipid scramblase and tubby-like superfamily of membrane tethered transcription factors. The chain is Protein LURP-one-related 11 from Arabidopsis thaliana (Mouse-ear cress).